Here is a 548-residue protein sequence, read N- to C-terminus: Cleavage and polyadenylation specificity factor subunit 6 (548 aa).

Residues Ile81–Lys161 enclose the RRM domain. The segment covering Met169–Gln180 has biased composition (polar residues). Disordered stretches follow at residues Met169–Val401 and Leu473–Arg548. 3 stretches are compositionally biased toward pro residues: residues Pro221–Met279, Pro294–Gly362, and Gly373–Pro384. Composition is skewed to basic and acidic residues over residues Pro385–Val400 and Arg490–Arg500. Positions Glu501–Arg511 are enriched in basic residues. Over residues Asp512–Arg548 the composition is skewed to basic and acidic residues.

It belongs to the RRM CPSF6/7 family. Component of the cleavage factor Im (CFIm) complex.

It is found in the nucleus. It localises to the nucleoplasm. The protein localises to the nucleus speckle. The protein resides in the cytoplasm. Functionally, component of the cleavage factor Im (CFIm) complex that functions as an activator of the pre-mRNA 3'-end cleavage and polyadenylation processing required for the maturation of pre-mRNA into functional mRNAs. CFIm contributes to the recruitment of multiprotein complexes on specific sequences on the pre-mRNA 3'-end, so called cleavage and polyadenylation signals (pA signals). Most pre-mRNAs contain multiple pA signals, resulting in alternative cleavage and polyadenylation (APA) producing mRNAs with variable 3'-end formation. The CFIm complex acts as a key regulator of cleavage and polyadenylation site choice during APA through its binding to 5'-UGUA-3' elements localized in the 3'-untranslated region (UTR) for a huge number of pre-mRNAs. Plays a role in mRNA export. The polypeptide is Cleavage and polyadenylation specificity factor subunit 6 (Xenopus laevis (African clawed frog)).